Reading from the N-terminus, the 310-residue chain is Probable manganese-dependent inorganic pyrophosphatase (310 aa).

Residues H9, D13, D15, D76, H98, and D150 each coordinate Mn(2+).

Belongs to the PPase class C family. Mn(2+) is required as a cofactor.

It localises to the cytoplasm. The catalysed reaction is diphosphate + H2O = 2 phosphate + H(+). The polypeptide is Probable manganese-dependent inorganic pyrophosphatase (Streptococcus thermophilus (strain CNRZ 1066)).